The primary structure comprises 716 residues: Exocyst complex component 8 (716 aa).

At S15 the chain carries Phosphoserine. Low complexity predominate over residues 110–119; the sequence is STGEDTAGAG. The tract at residues 110–149 is disordered; the sequence is STGEDTAGAGPRERGAAQAGFLPGPAGVPREGPGTGEEGK. The region spanning 173-273 is the PH domain; the sequence is YLVYNGDLVE…WLEVLEETKR (101 aa). A compositionally biased stretch (basic and acidic residues) spans 275–284; sequence LSDKRRREQE. The interval 275 to 319 is disordered; sequence LSDKRRREQEEAAALRAPPPVTSKGSNPFEDEAEEELATPEAEEE. Acidic residues predominate over residues 303–319; it reads FEDEAEEELATPEAEEE. At T313 the chain carries Phosphothreonine.

Belongs to the EXO84 family. The exocyst complex is composed of EXOC1, EXOC2, EXOC3, EXOC4, EXOC5, EXOC6, EXOC7 and EXOC8. Interacts (via PH domain) with GTP-bound RALA and RALB. Interacts with SH3BP1; required for the localization of both SH3BP1 and the exocyst to the leading edge of migrating cells.

It localises to the cytoplasm. The protein resides in the perinuclear region. The protein localises to the cell projection. It is found in the growth cone. Functionally, component of the exocyst complex involved in the docking of exocytic vesicles with fusion sites on the plasma membrane. The chain is Exocyst complex component 8 (Exoc8) from Rattus norvegicus (Rat).